A 98-amino-acid chain; its full sequence is Protein S100-A13 (98 aa).

The EF-hand domain maps to 18-53 (TTFFTFAGREGRKGSLSVNEFKELVTQQLPHLLKDV). The Ca(2+) site is built by serine 32, glutamate 37, aspartate 64, asparagine 66, aspartate 68, glutamate 70, and glutamate 75. The residue at position 32 (serine 32) is a Phosphoserine.

Belongs to the S-100 family. Homodimer. Part of a copper-dependent multiprotein complex containing S100A13, FGF1 and SYT1. Interacts with FGF1 and SYT1. Interacts with IL1A.

It is found in the cytoplasm. The protein localises to the secreted. Its function is as follows. Plays a role in the export of proteins that lack a signal peptide and are secreted by an alternative pathway. Binds two calcium ions per subunit. Binds one copper ion. Binding of one copper ion does not interfere with calcium binding. Required for the copper-dependent stress-induced export of IL1A and FGF1. The calcium-free protein binds to lipid vesicles containing phosphatidylserine, but not to vesicles containing phosphatidylcholine. The protein is Protein S100-A13 (S100A13) of Bos taurus (Bovine).